We begin with the raw amino-acid sequence, 221 residues long: MIRSNKPPENNCLLYNKGLMPYLAAHAWQRSLLRQRIDYPNLEDVLILLEHPPVYTLGQGSSLEFLKFDPNQSEFEIHRIERGGEVTYHCPGQLVGYPILNLHRHRQDLHWYLRQLEEVIIRVLAVYDLKGDRLPSLTGVWLEGRKVAAIGIKVSRWITMHGFALNVCPDMTGFSRIVPCGITDKPVGSLAQWIPGITCEEVRVHVVQAFAEVFGLELVDS.

The 179-residue stretch at 40–218 folds into the BPL/LPL catalytic domain; that stretch reads PNLEDVLILL…AFAEVFGLEL (179 aa). Substrate contacts are provided by residues 82 to 89, 149 to 151, and 162 to 164; these read RGGEVTYH, AIG, and GFA. Cysteine 180 acts as the Acyl-thioester intermediate in catalysis.

Belongs to the LipB family.

It localises to the cytoplasm. The enzyme catalyses octanoyl-[ACP] + L-lysyl-[protein] = N(6)-octanoyl-L-lysyl-[protein] + holo-[ACP] + H(+). Its pathway is protein modification; protein lipoylation via endogenous pathway; protein N(6)-(lipoyl)lysine from octanoyl-[acyl-carrier-protein]: step 1/2. Its function is as follows. Catalyzes the transfer of endogenously produced octanoic acid from octanoyl-acyl-carrier-protein onto the lipoyl domains of lipoate-dependent enzymes. Lipoyl-ACP can also act as a substrate although octanoyl-ACP is likely to be the physiological substrate. This is Octanoyltransferase from Nostoc sp. (strain PCC 7120 / SAG 25.82 / UTEX 2576).